Consider the following 433-residue polypeptide: Enolase (433 aa).

Position 167 (glutamine 167) interacts with (2R)-2-phosphoglycerate. Glutamate 209 functions as the Proton donor in the catalytic mechanism. Positions 246, 291, and 318 each coordinate Mg(2+). (2R)-2-phosphoglycerate-binding residues include lysine 343, arginine 372, serine 373, and lysine 394. Catalysis depends on lysine 343, which acts as the Proton acceptor.

The protein belongs to the enolase family. Component of the RNA degradosome, a multiprotein complex involved in RNA processing and mRNA degradation. The cofactor is Mg(2+).

Its subcellular location is the cytoplasm. The protein localises to the secreted. It localises to the cell surface. It catalyses the reaction (2R)-2-phosphoglycerate = phosphoenolpyruvate + H2O. It participates in carbohydrate degradation; glycolysis; pyruvate from D-glyceraldehyde 3-phosphate: step 4/5. Functionally, catalyzes the reversible conversion of 2-phosphoglycerate (2-PG) into phosphoenolpyruvate (PEP). It is essential for the degradation of carbohydrates via glycolysis. The sequence is that of Enolase from Pasteurella multocida (strain Pm70).